A 290-amino-acid chain; its full sequence is Phosphoribosylaminoimidazole-succinocarboxamide synthase (290 aa).

This sequence belongs to the SAICAR synthetase family.

It carries out the reaction 5-amino-1-(5-phospho-D-ribosyl)imidazole-4-carboxylate + L-aspartate + ATP = (2S)-2-[5-amino-1-(5-phospho-beta-D-ribosyl)imidazole-4-carboxamido]succinate + ADP + phosphate + 2 H(+). Its pathway is purine metabolism; IMP biosynthesis via de novo pathway; 5-amino-1-(5-phospho-D-ribosyl)imidazole-4-carboxamide from 5-amino-1-(5-phospho-D-ribosyl)imidazole-4-carboxylate: step 1/2. The polypeptide is Phosphoribosylaminoimidazole-succinocarboxamide synthase (purC) (Haemophilus influenzae (strain ATCC 51907 / DSM 11121 / KW20 / Rd)).